We begin with the raw amino-acid sequence, 345 residues long: Phosphoribosylformylglycinamidine cyclo-ligase (345 aa).

This sequence belongs to the AIR synthase family.

It is found in the cytoplasm. The enzyme catalyses 2-formamido-N(1)-(5-O-phospho-beta-D-ribosyl)acetamidine + ATP = 5-amino-1-(5-phospho-beta-D-ribosyl)imidazole + ADP + phosphate + H(+). It functions in the pathway purine metabolism; IMP biosynthesis via de novo pathway; 5-amino-1-(5-phospho-D-ribosyl)imidazole from N(2)-formyl-N(1)-(5-phospho-D-ribosyl)glycinamide: step 2/2. In Pseudoalteromonas atlantica (strain T6c / ATCC BAA-1087), this protein is Phosphoribosylformylglycinamidine cyclo-ligase.